An 823-amino-acid chain; its full sequence is MKEYIPGEIEPKWQKVWAESKVFETPQRSDKKKFYNLVMFPYPSGTLHVGHVKNYVIGDIVARYKRMKGYNVLHPFGYDAFGLPAENAAIKNKIHPEVWTFKNIDIIRNQIKKIGISYDWSREVITCTEEYYKWTQWIFLKLYENGLAYKKKAAVNWCPSCQTVLANEQVVDGKCERCGTEVTMKHLEQWYFKITDYAEKLLNDIDKLRGWPENVKIMQKNWIGKSTGAEIDFPVDRLDMKIKVFTTRPDTIWGVTFMAIAPESPLVEMLVTDERKDELSQFLKKVSLEDRFKRTSLEAEKEGFFLGRYAINPVTGEKIPIYVANYILYEYGTGAIMAVPAHDQRDFDFAKKYGISIRVVIDNPEESIDVEKMEKAYEEEGIMVNSGPFNGMRSTLALEKIIEYLEEKGIGKRSVQYKLRDWLISRQRYWGAPIPIVYCEKCGIVPVPEKDLPVKLPKDVEFLPTGQSPLSLDEQFLNTTCPKCGGPAKREADTMDTFVDSSWYYLRYINPKLEDKPFDTEDINYWMPVDQYIGGVEHAVLHLLYSRFITKVLYDLGYLKFEEPFENLFTQGMIYKDGWKMSKSKGNVVSPDEMIEKYGADTLRTYILFMAPPEKDAEWSDAGIEGVNRFLKRLWNNIYSILPRIKDVKVEKIELKNKQEKDLRRKLHQSIKKITEDIEGGFKFNTAIAGLMELNNNLSEYLNSAKDLNLPLLRELVEKLTLILSPFAPHMAEEIWHDLGNDTLVVNEEWPAYDENALKVDEVTVIIQINGKVRGKIQTKVDVSEGEIKKLAFENAKIASYVDGREIVKVIYVKNKLLNIVVK.

The 'HIGH' region signature appears at 41–51 (PYPSGTLHVGH). The short motif at 580–584 (KMSKS) is the 'KMSKS' region element. Position 583 (Lys-583) interacts with ATP.

Belongs to the class-I aminoacyl-tRNA synthetase family.

The protein resides in the cytoplasm. It carries out the reaction tRNA(Leu) + L-leucine + ATP = L-leucyl-tRNA(Leu) + AMP + diphosphate. The sequence is that of Leucine--tRNA ligase from Thermosipho melanesiensis (strain DSM 12029 / CIP 104789 / BI429).